A 214-amino-acid chain; its full sequence is Phosphatidylserine decarboxylase proenzyme (214 aa).

The active-site Schiff-base intermediate with substrate; via pyruvic acid is the S182. Residue S182 is modified to Pyruvic acid (Ser); by autocatalysis.

It belongs to the phosphatidylserine decarboxylase family. PSD-A subfamily. In terms of assembly, heterodimer of a large membrane-associated beta subunit and a small pyruvoyl-containing alpha subunit. The cofactor is pyruvate. In terms of processing, is synthesized initially as an inactive proenzyme. Formation of the active enzyme involves a self-maturation process in which the active site pyruvoyl group is generated from an internal serine residue via an autocatalytic post-translational modification. Two non-identical subunits are generated from the proenzyme in this reaction, and the pyruvate is formed at the N-terminus of the alpha chain, which is derived from the carboxyl end of the proenzyme. The post-translation cleavage follows an unusual pathway, termed non-hydrolytic serinolysis, in which the side chain hydroxyl group of the serine supplies its oxygen atom to form the C-terminus of the beta chain, while the remainder of the serine residue undergoes an oxidative deamination to produce ammonia and the pyruvoyl prosthetic group on the alpha chain.

The protein localises to the cell membrane. The enzyme catalyses a 1,2-diacyl-sn-glycero-3-phospho-L-serine + H(+) = a 1,2-diacyl-sn-glycero-3-phosphoethanolamine + CO2. It participates in phospholipid metabolism; phosphatidylethanolamine biosynthesis; phosphatidylethanolamine from CDP-diacylglycerol: step 2/2. Functionally, catalyzes the formation of phosphatidylethanolamine (PtdEtn) from phosphatidylserine (PtdSer). The polypeptide is Phosphatidylserine decarboxylase proenzyme (Burkholderia lata (strain ATCC 17760 / DSM 23089 / LMG 22485 / NCIMB 9086 / R18194 / 383)).